We begin with the raw amino-acid sequence, 282 residues long: Bifunctional protein FolD (282 aa).

NADP(+)-binding positions include Asn163–Ser165, Thr188, and Ile229.

It belongs to the tetrahydrofolate dehydrogenase/cyclohydrolase family. Homodimer.

The enzyme catalyses (6R)-5,10-methylene-5,6,7,8-tetrahydrofolate + NADP(+) = (6R)-5,10-methenyltetrahydrofolate + NADPH. The catalysed reaction is (6R)-5,10-methenyltetrahydrofolate + H2O = (6R)-10-formyltetrahydrofolate + H(+). Its pathway is one-carbon metabolism; tetrahydrofolate interconversion. Functionally, catalyzes the oxidation of 5,10-methylenetetrahydrofolate to 5,10-methenyltetrahydrofolate and then the hydrolysis of 5,10-methenyltetrahydrofolate to 10-formyltetrahydrofolate. The chain is Bifunctional protein FolD from Malacoplasma penetrans (strain HF-2) (Mycoplasma penetrans).